The primary structure comprises 190 residues: Peptidyl-tRNA hydrolase (190 aa).

Phe-14 provides a ligand contact to tRNA. His-19 acts as the Proton acceptor in catalysis. TRNA contacts are provided by Met-64, Asn-66, and Asn-112.

It belongs to the PTH family. In terms of assembly, monomer.

Its subcellular location is the cytoplasm. It carries out the reaction an N-acyl-L-alpha-aminoacyl-tRNA + H2O = an N-acyl-L-amino acid + a tRNA + H(+). Functionally, hydrolyzes ribosome-free peptidyl-tRNAs (with 1 or more amino acids incorporated), which drop off the ribosome during protein synthesis, or as a result of ribosome stalling. In terms of biological role, catalyzes the release of premature peptidyl moieties from peptidyl-tRNA molecules trapped in stalled 50S ribosomal subunits, and thus maintains levels of free tRNAs and 50S ribosomes. The polypeptide is Peptidyl-tRNA hydrolase (Staphylococcus aureus (strain Mu3 / ATCC 700698)).